The primary structure comprises 699 residues: Elongation factor G (699 aa).

The region spanning 8–288 is the tr-type G domain; sequence EDYRNFGIMA…AVVDYLPSPL (281 aa). Residues 17–24, 86–90, and 140–143 contribute to the GTP site; these read AHIDAGKT, DTPGH, and NKMD.

The protein belongs to the TRAFAC class translation factor GTPase superfamily. Classic translation factor GTPase family. EF-G/EF-2 subfamily.

The protein localises to the cytoplasm. Functionally, catalyzes the GTP-dependent ribosomal translocation step during translation elongation. During this step, the ribosome changes from the pre-translocational (PRE) to the post-translocational (POST) state as the newly formed A-site-bound peptidyl-tRNA and P-site-bound deacylated tRNA move to the P and E sites, respectively. Catalyzes the coordinated movement of the two tRNA molecules, the mRNA and conformational changes in the ribosome. The protein is Elongation factor G of Rhizobium rhizogenes (strain K84 / ATCC BAA-868) (Agrobacterium radiobacter).